Consider the following 432-residue polypeptide: Enolase (432 aa).

Residue Gln-164 coordinates (2R)-2-phosphoglycerate. Catalysis depends on Glu-206, which acts as the Proton donor. Residues Asp-243, Glu-284, and Asp-311 each contribute to the Mg(2+) site. (2R)-2-phosphoglycerate contacts are provided by Lys-336, Arg-365, Ser-366, and Lys-387. Lys-336 acts as the Proton acceptor in catalysis.

The protein belongs to the enolase family. It depends on Mg(2+) as a cofactor.

Its subcellular location is the cytoplasm. The protein resides in the secreted. It is found in the cell surface. It carries out the reaction (2R)-2-phosphoglycerate = phosphoenolpyruvate + H2O. It functions in the pathway carbohydrate degradation; glycolysis; pyruvate from D-glyceraldehyde 3-phosphate: step 4/5. Its function is as follows. Catalyzes the reversible conversion of 2-phosphoglycerate (2-PG) into phosphoenolpyruvate (PEP). It is essential for the degradation of carbohydrates via glycolysis. In Synechococcus sp. (strain JA-3-3Ab) (Cyanobacteria bacterium Yellowstone A-Prime), this protein is Enolase.